A 402-amino-acid polypeptide reads, in one-letter code: Probable sugar efflux transporter (402 aa).

12 consecutive transmembrane segments (helical) span residues V15 to M35, G51 to A71, L84 to L104, M109 to I129, Q137 to G157, V168 to L188, P209 to Y229, N245 to F265, F276 to E296, A297 to L317, V333 to G353, and I365 to L385.

The protein belongs to the major facilitator superfamily. SotB (TC 2.A.1.2) family.

It is found in the cell inner membrane. Its function is as follows. Involved in the efflux of sugars. The physiological role may be the reduction of the intracellular concentration of toxic sugars or sugar metabolites. This Haemophilus influenzae (strain 86-028NP) protein is Probable sugar efflux transporter.